The primary structure comprises 806 residues: Leucine--tRNA ligase (806 aa).

Residues 40-51 (PYPSGAGLHVGH) carry the 'HIGH' region motif. Positions 576-580 (KMSKS) match the 'KMSKS' region motif. Lys579 is an ATP binding site.

It belongs to the class-I aminoacyl-tRNA synthetase family.

Its subcellular location is the cytoplasm. It catalyses the reaction tRNA(Leu) + L-leucine + ATP = L-leucyl-tRNA(Leu) + AMP + diphosphate. This chain is Leucine--tRNA ligase, found in Halalkalibacterium halodurans (strain ATCC BAA-125 / DSM 18197 / FERM 7344 / JCM 9153 / C-125) (Bacillus halodurans).